The primary structure comprises 315 residues: Prephenate dehydratase (315 aa).

In terms of domain architecture, Prephenate dehydratase spans R3–R190. The ACT domain maps to S204–P281.

In terms of assembly, homodimer.

The enzyme catalyses prephenate + H(+) = 3-phenylpyruvate + CO2 + H2O. Its pathway is amino-acid biosynthesis; L-phenylalanine biosynthesis; phenylpyruvate from prephenate: step 1/1. In Mycobacterium sp. (strain JLS), this protein is Prephenate dehydratase (pheA).